Reading from the N-terminus, the 337-residue chain is Adenylosuccinate synthetase (337 aa).

GTP contacts are provided by residues 12 to 18 and 42 to 44; these read GDEGKGK and GHT. Catalysis depends on Asp13, which acts as the Proton acceptor. Positions 13 and 42 each coordinate Mg(2+). IMP is bound by residues 13–16, 40–43, Thr127, Arg141, Gln179, Thr194, and Arg256; these read DEGK and NAGH. Residue His43 is the Proton donor of the active site. A substrate-binding site is contributed by 252–258; that stretch reads TVTGRRR. Residues Arg258, 284–286, and 324–326 each bind GTP; these read CLD and STG.

Belongs to the adenylosuccinate synthetase family. Homodimer. The cofactor is Mg(2+).

It localises to the cytoplasm. It carries out the reaction IMP + L-aspartate + GTP = N(6)-(1,2-dicarboxyethyl)-AMP + GDP + phosphate + 2 H(+). The protein operates within purine metabolism; AMP biosynthesis via de novo pathway; AMP from IMP: step 1/2. Plays an important role in the de novo pathway of purine nucleotide biosynthesis. Catalyzes the first committed step in the biosynthesis of AMP from IMP. This chain is Adenylosuccinate synthetase, found in Methanococcus maripaludis (strain C5 / ATCC BAA-1333).